The primary structure comprises 648 residues: Threonine--tRNA ligase (648 aa).

One can recognise a TGS domain in the interval 1 to 63; the sequence is MAQISLTFPD…TQDAAIAIHT (63 aa). The interval 247 to 544 is catalytic; it reads DHRKLGREMN…LIEEHAGKLP (298 aa). Zn(2+) contacts are provided by C344, H395, and H521.

This sequence belongs to the class-II aminoacyl-tRNA synthetase family. Homodimer. The cofactor is Zn(2+).

It is found in the cytoplasm. It catalyses the reaction tRNA(Thr) + L-threonine + ATP = L-threonyl-tRNA(Thr) + AMP + diphosphate + H(+). Catalyzes the attachment of threonine to tRNA(Thr) in a two-step reaction: L-threonine is first activated by ATP to form Thr-AMP and then transferred to the acceptor end of tRNA(Thr). Also edits incorrectly charged L-seryl-tRNA(Thr). The sequence is that of Threonine--tRNA ligase from Ruegeria sp. (strain TM1040) (Silicibacter sp.).